A 219-amino-acid polypeptide reads, in one-letter code: Probable N-acetyltransferase camello (219 aa).

The next 2 membrane-spanning stretches (helical) occupy residues 42-62 (FYFIIIVACASIFMCTSSYVL) and 64-84 (LTSLVALLAVGWYGLYLEFHG). The N-acetyltransferase domain occupies 62–218 (LSLTSLVALL…TVIYYRYDIK (157 aa)).

This sequence belongs to the camello family. In terms of tissue distribution, at the beginning of gastrulation, expressed in deep cells of the presumptive mesoderm. At later gastrulation stages, expressed at the interface between already involuted and preinvoluted mesoderm. At late neurula and tailbud stages, expressed in the deep mass of cells lying ventrally and laterally to the closed blastopore.

The protein resides in the golgi apparatus membrane. In terms of biological role, plays a role in regulation of gastrulation, possibly by controlled reduction of cell adhesion which is necessary for optimal cell motility. This chain is Probable N-acetyltransferase camello, found in Xenopus laevis (African clawed frog).